The chain runs to 365 residues: Alanine racemase (365 aa).

The active-site Proton acceptor; specific for D-alanine is the K32. At K32 the chain carries N6-(pyridoxal phosphate)lysine. R128 lines the substrate pocket. Y257 acts as the Proton acceptor; specific for L-alanine in catalysis. M305 contacts substrate.

The protein belongs to the alanine racemase family. Pyridoxal 5'-phosphate serves as cofactor.

The enzyme catalyses L-alanine = D-alanine. The protein operates within amino-acid biosynthesis; D-alanine biosynthesis; D-alanine from L-alanine: step 1/1. In terms of biological role, catalyzes the interconversion of L-alanine and D-alanine. May also act on other amino acids. In Francisella tularensis subsp. holarctica (strain LVS), this protein is Alanine racemase (alr).